We begin with the raw amino-acid sequence, 132 residues long: Large ribosomal subunit protein bL17 (132 aa).

Belongs to the bacterial ribosomal protein bL17 family. As to quaternary structure, part of the 50S ribosomal subunit. Contacts protein L32.

The sequence is that of Large ribosomal subunit protein bL17 from Marinobacter nauticus (strain ATCC 700491 / DSM 11845 / VT8) (Marinobacter aquaeolei).